The primary structure comprises 162 residues: Ribonuclease (162 aa).

Residues 1–29 (MKKISSVFTMFALIAAILFSGFIPQQAYA) form the signal peptide. Positions 30–53 (ETTLTPTATNKTASIQLTSDVHTL) are excised as a propeptide. Glu125 acts as the Proton acceptor in catalysis. His154 functions as the Proton donor in the catalytic mechanism.

This sequence belongs to the ribonuclease N1/T1 family.

The protein localises to the secreted. Functionally, this is a purine-specific ribonuclease. This is Ribonuclease from Bacillus pumilus (Bacillus mesentericus).